A 696-amino-acid polypeptide reads, in one-letter code: Elongation factor G (696 aa).

Residues 8-290 (ERYRNIGVMA…AVLDYLPSPA (283 aa)) form the tr-type G domain. Residues 17 to 24 (AHIDAGKT), 88 to 92 (DTPGH), and 142 to 145 (NKMD) each bind GTP.

Belongs to the TRAFAC class translation factor GTPase superfamily. Classic translation factor GTPase family. EF-G/EF-2 subfamily.

The protein resides in the cytoplasm. Catalyzes the GTP-dependent ribosomal translocation step during translation elongation. During this step, the ribosome changes from the pre-translocational (PRE) to the post-translocational (POST) state as the newly formed A-site-bound peptidyl-tRNA and P-site-bound deacylated tRNA move to the P and E sites, respectively. Catalyzes the coordinated movement of the two tRNA molecules, the mRNA and conformational changes in the ribosome. This chain is Elongation factor G, found in Nitrosospira multiformis (strain ATCC 25196 / NCIMB 11849 / C 71).